Consider the following 503-residue polypeptide: MALDPEQQQPISSVSREFGKSSGEISPEREPLIKENHVPENYSVVAAILPFLFPALGGLLYGYEIGATSCATISLQSPSLSGISWYNLSSVDVGLVTSGSLYGALFGSIVAFTIADVIGRRKELILAALLYLVGALVTALAPTYSVLIIGRVIYGVSVGLAMHAAPMYIAETAPSPIRGQLVSLKEFFIVLGMVGGYGIGSLTVNVHSGWRYMYATSVPLAVIMGIGMWWLPASPRWLLLRVIQGKGNVENQREAAIKSLCCLRGPAFVDSAAEQVNEILAELTFVGEDKEVTFGELFQGKCLKALIIGGGLVLFQQITGQPSVLYYAPSILQTAGFSAAGDATRVSILLGLLKLIMTGVAVVVIDRLGRRPLLLGGVGGMVVSLFLLGSYYLFFSASPVVAVVALLLYVGCYQLSFGPIGWLMISEIFPLKLRGRGLSLAVLVNFGANALVTFAFSPLKELLGAGILFCGFGVICVLSLVFIFFIVPETKGLTLEEIEAKCL.

Residues 1 to 15 (MALDPEQQQPISSVS) show a composition bias toward polar residues. A disordered region spans residues 1-32 (MALDPEQQQPISSVSREFGKSSGEISPEREPL). N-acetylalanine is present on alanine 2. Serine 26 is modified (phosphoserine). 12 consecutive transmembrane segments (helical) span residues 42–62 (YSVVAAILPFLFPALGGLLYG), 99–119 (GSLYGALFGSIVAFTIADVIG), 124–144 (LILAALLYLVGALVTALAPTY), 146–166 (VLIIGRVIYGVSVGLAMHAAP), 187–207 (FFIVLGMVGGYGIGSLTVNVH), 213–233 (MYATSVPLAVIMGIGMWWLPA), 305–325 (ALIIGGGLVLFQQITGQPSVL), 346–366 (VSILLGLLKLIMTGVAVVVID), 375–395 (LGGVGGMVVSLFLLGSYYLFF), 400–420 (VVAVVALLLYVGCYQLSFGPI), 437–457 (GLSLAVLVNFGANALVTFAFS), and 467–487 (ILFCGFGVICVLSLVFIFFIV).

This sequence belongs to the major facilitator superfamily. Sugar transporter (TC 2.A.1.1) family.

It localises to the membrane. The chain is D-xylose-proton symporter-like 2 from Arabidopsis thaliana (Mouse-ear cress).